The primary structure comprises 984 residues: Zinc finger and BTB domain-containing protein 4 (984 aa).

The region spanning Cys-30–Gly-131 is the BTB domain. Lys-40 participates in a covalent cross-link: Glycyl lysine isopeptide (Lys-Gly) (interchain with G-Cter in SUMO2). Disordered regions lie at residues Thr-71–Val-104, Met-172–Phe-210, and Thr-227–Leu-262. The segment covering Ser-74–Ser-88 has biased composition (low complexity). The segment at Val-165–Leu-324 is interaction with CBFA2T3. A C2H2-type 1; atypical zinc finger spans residues Phe-210–Cys-232. Residues Ala-242–Ala-255 are compositionally biased toward gly residues. C2H2-type zinc fingers lie at residues Tyr-285–His-307, Tyr-313–His-335, and Tyr-341–His-364. Ser-367 is modified (phosphoserine). A disordered region spans residues Gly-461 to Pro-575. Residues Ala-467–Gly-477 show a composition bias toward gly residues. 2 stretches are compositionally biased toward low complexity: residues Ser-478–Thr-488 and Ala-507–Thr-529. Lys-548 participates in a covalent cross-link: Glycyl lysine isopeptide (Lys-Gly) (interchain with G-Cter in SUMO2). The segment covering Gly-552–Arg-565 has biased composition (gly residues). Lys-590 participates in a covalent cross-link: Glycyl lysine isopeptide (Lys-Gly) (interchain with G-Cter in SUMO2). Disordered regions lie at residues Ile-593–Arg-696, Arg-713–Thr-734, Gln-756–Gly-836, Gly-853–Gly-876, and Gln-947–Gly-984. Residues Ser-604–Glu-627 show a composition bias toward acidic residues. A compositionally biased stretch (basic and acidic residues) spans Glu-628 to Leu-637. C2H2-type zinc fingers lie at residues His-697–His-719 and Phe-736–His-758. 2 positions are modified to phosphothreonine; by HIPK2: Thr-766 and Thr-768. Over residues Ala-807 to Ser-819 the composition is skewed to low complexity. The segment covering Thr-948–Pro-966 has biased composition (pro residues). Thr-955 carries the post-translational modification Phosphothreonine; by HIPK2.

Interacts with HIPK2. Interacts with CBFA2T3. Interacts with ZBTB38. Post-translationally, phosphorylated by HIPK2. This phosphorylation reduces stability and triggers ZBTB4 protein degradation in response to DNA damage.

The protein localises to the nucleus. It is found in the chromosome. In terms of biological role, transcriptional repressor with bimodal DNA-binding specificity. Represses transcription in a methyl-CpG-dependent manner. Binds with a higher affinity to methylated CpG dinucleotides in the consensus sequence 5'-CGCG-3' but can also bind to the non-methylated consensus sequence 5'-CTGCNA-3' also known as the consensus kaiso binding site (KBS). Can also bind specifically to a single methyl-CpG pair and can bind hemimethylated DNA but with a lower affinity compared to methylated DNA. Plays a role in postnatal myogenesis, may be involved in the regulation of satellite cells self-renewal. This is Zinc finger and BTB domain-containing protein 4 (Zbtb4) from Rattus norvegicus (Rat).